A 446-amino-acid polypeptide reads, in one-letter code: Adenylosuccinate synthetase (446 aa).

GTP-binding positions include 21 to 27 (GDEGKGK) and 49 to 51 (GHT). The Proton acceptor role is filled by aspartate 22. Mg(2+)-binding residues include aspartate 22 and glycine 49. IMP is bound by residues 22 to 25 (DEGK), 47 to 50 (NAGH), threonine 141, arginine 155, glutamine 236, threonine 251, and arginine 319. The Proton donor role is filled by histidine 50. Position 315–321 (315–321 (VTTGRSR)) interacts with substrate. Residues arginine 321, 347-349 (KLD), and 429-431 (STS) each bind GTP.

This sequence belongs to the adenylosuccinate synthetase family. As to quaternary structure, homodimer. It depends on Mg(2+) as a cofactor.

It localises to the cytoplasm. The catalysed reaction is IMP + L-aspartate + GTP = N(6)-(1,2-dicarboxyethyl)-AMP + GDP + phosphate + 2 H(+). Its pathway is purine metabolism; AMP biosynthesis via de novo pathway; AMP from IMP: step 1/2. Its function is as follows. Plays an important role in the de novo pathway of purine nucleotide biosynthesis. Catalyzes the first committed step in the biosynthesis of AMP from IMP. In Polaromonas naphthalenivorans (strain CJ2), this protein is Adenylosuccinate synthetase.